The sequence spans 591 residues: Aspartate--tRNA ligase (591 aa).

Glu171 lines the L-aspartate pocket. The interval Gln195–Lys198 is aspartate. Residue Arg217 participates in L-aspartate binding. Residues Arg217–Glu219 and Gln226 contribute to the ATP site. His448 lines the L-aspartate pocket. Position 482 (Glu482) interacts with ATP. Arg489 is an L-aspartate binding site. Gly534–Arg537 is a binding site for ATP.

This sequence belongs to the class-II aminoacyl-tRNA synthetase family. Type 1 subfamily. As to quaternary structure, homodimer.

The protein resides in the cytoplasm. The enzyme catalyses tRNA(Asp) + L-aspartate + ATP = L-aspartyl-tRNA(Asp) + AMP + diphosphate. In terms of biological role, catalyzes the attachment of L-aspartate to tRNA(Asp) in a two-step reaction: L-aspartate is first activated by ATP to form Asp-AMP and then transferred to the acceptor end of tRNA(Asp). The protein is Aspartate--tRNA ligase of Aliivibrio fischeri (strain MJ11) (Vibrio fischeri).